The chain runs to 466 residues: Fumarate hydratase class II (466 aa).

Substrate is bound by residues 100–102 (SGT), Arg-128, 131–134 (HPND), 141–143 (SSN), and Thr-189. Positions 122–137 (GERGERRKVHPNDDVN) are enriched in basic and acidic residues. A disordered region spans residues 122-143 (GERGERRKVHPNDDVNKGQSSN). His-190 serves as the catalytic Proton donor/acceptor. Ser-320 is an active-site residue. Residues Ser-321 and 326 to 328 (KVN) contribute to the substrate site.

Belongs to the class-II fumarase/aspartase family. Fumarase subfamily. As to quaternary structure, homotetramer.

The protein localises to the cytoplasm. The enzyme catalyses (S)-malate = fumarate + H2O. Its pathway is carbohydrate metabolism; tricarboxylic acid cycle; (S)-malate from fumarate: step 1/1. Functionally, involved in the TCA cycle. Catalyzes the stereospecific interconversion of fumarate to L-malate. The chain is Fumarate hydratase class II from Myxococcus xanthus (strain DK1622).